Consider the following 72-residue polypeptide: Translation initiation factor IF-1 (72 aa).

Residues 1–72 (MAKDDVIEIQ…TKGRITYRFK (72 aa)) enclose the S1-like domain.

The protein belongs to the IF-1 family. In terms of assembly, component of the 30S ribosomal translation pre-initiation complex which assembles on the 30S ribosome in the order IF-2 and IF-3, IF-1 and N-formylmethionyl-tRNA(fMet); mRNA recruitment can occur at any time during PIC assembly.

It localises to the cytoplasm. In terms of biological role, one of the essential components for the initiation of protein synthesis. Stabilizes the binding of IF-2 and IF-3 on the 30S subunit to which N-formylmethionyl-tRNA(fMet) subsequently binds. Helps modulate mRNA selection, yielding the 30S pre-initiation complex (PIC). Upon addition of the 50S ribosomal subunit IF-1, IF-2 and IF-3 are released leaving the mature 70S translation initiation complex. This is Translation initiation factor IF-1 from Lacticaseibacillus paracasei (strain ATCC 334 / BCRC 17002 / CCUG 31169 / CIP 107868 / KCTC 3260 / NRRL B-441) (Lactobacillus paracasei).